The primary structure comprises 335 residues: Eukaryotic translation initiation factor 3 subunit H-A (335 aa).

The 135-residue stretch at 22–156 (IQVDGLVVLK…LKAYRLTPKL (135 aa)) folds into the MPN domain. Over residues 254 to 272 (QQQKQQYQQRRQQENAQRQ) the composition is skewed to low complexity. Residues 254–282 (QQQKQQYQQRRQQENAQRQSRGEPPLPEE) form a disordered region.

Belongs to the eIF-3 subunit H family. In terms of assembly, component of the eukaryotic translation initiation factor 3 (eIF-3) complex, which is composed of 13 subunits: eif3a, eif3b, eif3c, eif3d, eif3e, eif3f, eif3g, eif3h, eif3i, eif3j, eif3k, eif3l and eif3m.

The protein resides in the cytoplasm. In terms of biological role, component of the eukaryotic translation initiation factor 3 (eIF-3) complex, which is involved in protein synthesis of a specialized repertoire of mRNAs and, together with other initiation factors, stimulates binding of mRNA and methionyl-tRNAi to the 40S ribosome. The eIF-3 complex specifically targets and initiates translation of a subset of mRNAs involved in cell proliferation. The polypeptide is Eukaryotic translation initiation factor 3 subunit H-A (eif3ha) (Danio rerio (Zebrafish)).